A 353-amino-acid chain; its full sequence is Stomatin-like protein 2, mitochondrial (353 aa).

The transit peptide at 1 to 28 directs the protein to the mitochondrion; that stretch reads MLARAARGTGALLLRGSVQASGRVPRRA. At Ser-17 the chain carries Phosphoserine; by PKC/PRKCZ. Tyr-124 bears the Phosphotyrosine mark. The residue at position 145 (Lys-145) is an N6-acetyllysine; alternate. An N6-succinyllysine; alternate modification is found at Lys-145. The stretch at 215-252 forms a coiled coil; sequence INVAEGKKQAQILASEAEKAEQINQAAGEASAVLAKAK. Lys-233 carries the N6-acetyllysine modification. The interval 324-353 is disordered; sequence VPGAQNSSQSRRDVQATDTSIEELGRVKLS. Residue Ser-330 is modified to Phosphoserine.

This sequence belongs to the band 7/mec-2 family. Forms homooligomers. Interacts with MFN2; may form heterooligomers. Interacts with PHB1 and PHB2; recruits them to cardiolipin-enriched mitochondrial membranes and stabilizes them. Interacts with CACNA2D2.

The protein resides in the cell membrane. The protein localises to the mitochondrion. It is found in the mitochondrion inner membrane. It localises to the mitochondrion intermembrane space. Its subcellular location is the membrane raft. The protein resides in the cytoplasm. The protein localises to the cytoskeleton. Its function is as follows. Mitochondrial protein that probably regulates the biogenesis and the activity of mitochondria. Stimulates cardiolipin biosynthesis, binds cardiolipin-enriched membranes where it recruits and stabilizes some proteins including prohibitin and may therefore act in the organization of functional microdomains in mitochondrial membranes. Through regulation of the mitochondrial function may play a role into several biological processes including cell migration, cell proliferation, T-cell activation, calcium homeostasis and cellular response to stress. May play a role in calcium homeostasis through negative regulation of calcium efflux from mitochondria. Required for mitochondrial hyperfusion a pro-survival cellular response to stress which results in increased ATP production by mitochondria. May also regulate the organization of functional domains at the plasma membrane and play a role in T-cell activation through association with the T-cell receptor signaling complex and its regulation. This is Stomatin-like protein 2, mitochondrial (Stoml2) from Mus musculus (Mouse).